The sequence spans 268 residues: Protein MGF 300-1L (268 aa).

The Cytoplasmic segment spans residues 1–175; that stretch reads MVSLTTCCLK…QTFKTFYAKN (175 aa). The chain crosses the membrane as a helical span at residues 176-193; it reads YSLSTLYCIFLAIYYKLY. Topologically, residues 194–268 are extracellular; that stretch reads TALRKMVKIY…MYAFSQNDYW (75 aa). A glycan (N-linked (GlcNAc...) asparagine; by host) is linked at Asn-227.

It belongs to the asfivirus MGF 300 family.

The protein resides in the host membrane. Plays a role in virus cell tropism, and may be required for efficient virus replication in macrophages. This chain is Protein MGF 300-1L, found in African swine fever virus (strain Badajoz 1971 Vero-adapted) (Ba71V).